Consider the following 287-residue polypeptide: Co-chaperone protein DjlA (287 aa).

The Periplasmic segment spans residues 1-6 (MQIFGK). The helical transmembrane segment at 7–30 (ILGAFFGFLFGGVFGALFGLFIGH) threads the bilayer. The Cytoplasmic portion of the chain corresponds to 31-287 (QFDKARRLSQ…DLIKKEKGFK (257 aa)). Positions 192–213 (GGFGGQQHQSHHSSSHGGWQQA) are disordered. The 67-residue stretch at 221-287 (DAYKILGIDA…DLIKKEKGFK (67 aa)) folds into the J domain.

Homodimer.

The protein resides in the cell inner membrane. Regulatory DnaK co-chaperone. Direct interaction between DnaK and DjlA is needed for the induction of the wcaABCDE operon, involved in the synthesis of a colanic acid polysaccharide capsule, possibly through activation of the RcsB/RcsC phosphotransfer signaling pathway. The colanic acid capsule may help the bacterium survive conditions outside the host. In Vibrio vulnificus (strain CMCP6), this protein is Co-chaperone protein DjlA.